A 535-amino-acid chain; its full sequence is T-complex protein 1 subunit zeta (535 aa).

It belongs to the TCP-1 chaperonin family. Heterooligomeric complex of about 850 to 900 kDa that forms two stacked rings, 12 to 16 nm in diameter.

It localises to the cytoplasm. Its function is as follows. Molecular chaperone; assists the folding of proteins upon ATP hydrolysis. Known to play a role, in vitro, in the folding of actin and tubulin. This chain is T-complex protein 1 subunit zeta (cct6), found in Schizosaccharomyces pombe (strain 972 / ATCC 24843) (Fission yeast).